Reading from the N-terminus, the 403-residue chain is Cysteine desulfurase IscS (403 aa).

Pyridoxal 5'-phosphate contacts are provided by residues 73–74, asparagine 153, glutamine 181, and 201–203; these read AT and SAH. An N6-(pyridoxal phosphate)lysine modification is found at lysine 204. Threonine 241 contacts pyridoxal 5'-phosphate. Residue cysteine 326 is the Cysteine persulfide intermediate of the active site. Cysteine 326 contacts [2Fe-2S] cluster.

Belongs to the class-V pyridoxal-phosphate-dependent aminotransferase family. NifS/IscS subfamily. In terms of assembly, homodimer. Forms a heterotetramer with IscU, interacts with other sulfur acceptors. It depends on pyridoxal 5'-phosphate as a cofactor.

The protein resides in the cytoplasm. The catalysed reaction is (sulfur carrier)-H + L-cysteine = (sulfur carrier)-SH + L-alanine. Its pathway is cofactor biosynthesis; iron-sulfur cluster biosynthesis. Functionally, master enzyme that delivers sulfur to a number of partners involved in Fe-S cluster assembly, tRNA modification or cofactor biosynthesis. Catalyzes the removal of elemental sulfur atoms from cysteine to produce alanine. Functions as a sulfur delivery protein for Fe-S cluster synthesis onto IscU, an Fe-S scaffold assembly protein, as well as other S acceptor proteins. The chain is Cysteine desulfurase IscS from Methylococcus capsulatus (strain ATCC 33009 / NCIMB 11132 / Bath).